The following is a 94-amino-acid chain: Large ribosomal subunit protein uL23 (94 aa).

The protein belongs to the universal ribosomal protein uL23 family. Part of the 50S ribosomal subunit. Contacts protein L29, and trigger factor when it is bound to the ribosome.

In terms of biological role, one of the early assembly proteins it binds 23S rRNA. One of the proteins that surrounds the polypeptide exit tunnel on the outside of the ribosome. Forms the main docking site for trigger factor binding to the ribosome. The chain is Large ribosomal subunit protein uL23 from Exiguobacterium sibiricum (strain DSM 17290 / CCUG 55495 / CIP 109462 / JCM 13490 / 255-15).